Consider the following 108-residue polypeptide: MMKGQLAGLMKQAQQMQENMKKMQEQLALIEVEGQSGAGLVKVTMTCKNDVRRVSIDPSLLADDKDMLEDLVAAAFNDAVRKAEATAQEKMGGMTSGLPLPPGFKLPF.

The tract at residues 87–108 (AQEKMGGMTSGLPLPPGFKLPF) is disordered. The segment covering 99 to 108 (PLPPGFKLPF) has biased composition (pro residues).

This sequence belongs to the YbaB/EbfC family. In terms of assembly, homodimer.

It localises to the cytoplasm. It is found in the nucleoid. Its function is as follows. Binds to DNA and alters its conformation. May be involved in regulation of gene expression, nucleoid organization and DNA protection. The sequence is that of Nucleoid-associated protein Bphyt_1827 from Paraburkholderia phytofirmans (strain DSM 17436 / LMG 22146 / PsJN) (Burkholderia phytofirmans).